The primary structure comprises 195 residues: HTH-type transcriptional regulator BetI (195 aa).

An HTH tetR-type domain is found at 8–68 (PIRRRQLIDA…ATMRDITSQL (61 aa)). A DNA-binding region (H-T-H motif) is located at residues 31-50 (TIAQIARRAGVSTGIISHYF).

Its pathway is amine and polyamine biosynthesis; betaine biosynthesis via choline pathway [regulation]. In terms of biological role, repressor involved in the biosynthesis of the osmoprotectant glycine betaine. It represses transcription of the choline transporter BetT and the genes of BetAB involved in the synthesis of glycine betaine. The polypeptide is HTH-type transcriptional regulator BetI (Klebsiella pneumoniae (strain 342)).